The sequence spans 693 residues: Elongation factor G (693 aa).

The tr-type G domain maps to 8–282 (EKTRNIGIMA…AVIDYLPSPL (275 aa)). GTP-binding positions include 17–24 (AHIDAGKT), 81–85 (DTPGH), and 135–138 (NKMD).

It belongs to the TRAFAC class translation factor GTPase superfamily. Classic translation factor GTPase family. EF-G/EF-2 subfamily.

The protein resides in the cytoplasm. Catalyzes the GTP-dependent ribosomal translocation step during translation elongation. During this step, the ribosome changes from the pre-translocational (PRE) to the post-translocational (POST) state as the newly formed A-site-bound peptidyl-tRNA and P-site-bound deacylated tRNA move to the P and E sites, respectively. Catalyzes the coordinated movement of the two tRNA molecules, the mRNA and conformational changes in the ribosome. This is Elongation factor G from Staphylococcus aureus (strain Newman).